Here is a 138-residue protein sequence, read N- to C-terminus: Salivary protein 15 Iper-3 (138 aa).

A signal peptide spans 1–21; it reads MESFVAMKVVCITVLFVIVAV. 5 N-linked (GlcNAc...) asparagine glycosylation sites follow: N30, N42, N68, N107, and N127. Positions 119–138 are CD4-binding; the sequence is GPNGQKCANKSQCVGHIPGC.

The protein belongs to the salp15 family. As to quaternary structure, interacts with host CD4. Interacts with host DC-SIGN (CD209). Interacts with Borrelia outer surface protein C (OspC). In terms of tissue distribution, expressed in salivary glands.

Its subcellular location is the secreted. Its function is as follows. Salivary tick protein that downregulates host immune system by binding to both dendritic cells, and CD4(+) T cells. Specifically binds to the CD4 coreceptor on T cells. This interaction prevents the activation of the Src kinase, Lck, and its downstream substrate Zap-70, and results in deficient activation of PLCgamma1, the repression of calcium fluxes triggered by T-cell antigen receptor (TCR) ligation, and a subsequent reduction in interleukin-2 production. This salivary protein also binds to DC-SIGN (CD209) on dendritic cells (DC) and activates the Raf-1 kinase/MEK signaling pathway that results in down-regulating expression of pro-inflammatory cytokines. Furthermore, it inhibits T cell proliferation induced by DCs. It also inhibits in vitro keratinocyte inflammation induced by Borrelia burgdorferi or by the major outer surface protein (OspC) of Borrelia. In addition, it downregulates chemokines and monocyte chemoattractant protein 1, as well as several antimicrobial peptides such as defensins, cathelicidin, psoriasin, and RNase 7. Apart from its immunomodulatory activities, it is also associated with protection of Borrelia spirochetes from antibody-mediated killing through its binding to OspC. In vivo, tests on different immune disease animal models show promising therapeutic results, e.g., in inhibiting HIV infection, experimental autoimmune encephalomyelitis, transplantation rejection, and asthma. This Ixodes persulcatus (Taiga tick) protein is Salivary protein 15 Iper-3.